The following is a 206-amino-acid chain: Guanylate kinase (206 aa).

The Guanylate kinase-like domain occupies 5–184 (GMLIVLSGPS…AAERIKAIIR (180 aa)). 12-19 (GPSGVGKG) is a binding site for ATP.

Belongs to the guanylate kinase family.

The protein resides in the cytoplasm. It carries out the reaction GMP + ATP = GDP + ADP. Essential for recycling GMP and indirectly, cGMP. The chain is Guanylate kinase from Lactiplantibacillus plantarum (strain ATCC BAA-793 / NCIMB 8826 / WCFS1) (Lactobacillus plantarum).